The sequence spans 1235 residues: ATP-dependent helicase/nuclease subunit A (1235 aa).

The 473-residue stretch at 10-482 (SIWTDDQWSA…IDLNQNFRSR (473 aa)) folds into the UvrD-like helicase ATP-binding domain. Residue 31–38 (AAAGSGKT) participates in ATP binding. In terms of domain architecture, UvrD-like helicase C-terminal spans 509–799 (QAALKLGASY…RLMTIHSSKG (291 aa)).

The protein belongs to the helicase family. AddA subfamily. In terms of assembly, heterodimer of AddA and AddB/RexB. Mg(2+) is required as a cofactor.

The catalysed reaction is Couples ATP hydrolysis with the unwinding of duplex DNA by translocating in the 3'-5' direction.. It catalyses the reaction ATP + H2O = ADP + phosphate + H(+). In terms of biological role, the heterodimer acts as both an ATP-dependent DNA helicase and an ATP-dependent, dual-direction single-stranded exonuclease. Recognizes the chi site generating a DNA molecule suitable for the initiation of homologous recombination. The AddA nuclease domain is required for chi fragment generation; this subunit has the helicase and 3' -&gt; 5' nuclease activities. The protein is ATP-dependent helicase/nuclease subunit A of Bacillus velezensis (strain DSM 23117 / BGSC 10A6 / LMG 26770 / FZB42) (Bacillus amyloliquefaciens subsp. plantarum).